Here is a 215-residue protein sequence, read N- to C-terminus: Cytochrome b6 (215 aa).

Residues 32-52 (IFYCLGGITLTCFLVQVATGF) form a helical membrane-spanning segment. Cys35 is a heme c binding site. 2 residues coordinate heme b: His86 and His100. Transmembrane regions (helical) follow at residues 90-110 (ASMM…TGGF), 116-136 (LTWV…VTGY), and 186-206 (LHTF…FLMI). Heme b contacts are provided by His187 and His202.

This sequence belongs to the cytochrome b family. PetB subfamily. In terms of assembly, the 4 large subunits of the cytochrome b6-f complex are cytochrome b6, subunit IV (17 kDa polypeptide, PetD), cytochrome f and the Rieske protein, while the 4 small subunits are PetG, PetL, PetM and PetN. The complex functions as a dimer. It depends on heme b as a cofactor. Requires heme c as cofactor.

The protein localises to the plastid. It localises to the chloroplast thylakoid membrane. Its function is as follows. Component of the cytochrome b6-f complex, which mediates electron transfer between photosystem II (PSII) and photosystem I (PSI), cyclic electron flow around PSI, and state transitions. The sequence is that of Cytochrome b6 from Gossypium barbadense (Sea Island cotton).